The primary structure comprises 229 residues: MSDSQEIPYHNQLKNRFRGYFPVIIDVETAGFDAKKDALLELAAITLKMDENGYLHPDQKCHFHIEPFEGANINPESLKFNGIDIHNPLRGAVSELDAITGLFQMIRRGQKDADCQRSIIVAHNAAFDQSFVMAAAERTGVKRNPFHPFGMFDTASLAGLMFGQTVLVKACLAAKIPFDGKQAHSALYDTERTAELFCYMVNHLKDLGGFPHISQIDETENTAENQTAL.

One can recognise an Exonuclease domain in the interval 23–197 (VIIDVETAGF…YDTERTAELF (175 aa)). Residues Asp26, Glu28, His184, and Asp189 each coordinate Mg(2+). His184 functions as the Proton donor/acceptor in the catalytic mechanism.

Belongs to the RNase T family. In terms of assembly, homodimer. Requires Mg(2+) as cofactor.

Trims short 3' overhangs of a variety of RNA species, leaving a one or two nucleotide 3' overhang. Responsible for the end-turnover of tRNA: specifically removes the terminal AMP residue from uncharged tRNA (tRNA-C-C-A). Also appears to be involved in tRNA biosynthesis. The chain is Ribonuclease T from Haemophilus influenzae (strain PittEE).